Consider the following 306-residue polypeptide: Oxygen-dependent coproporphyrinogen-III oxidase (306 aa).

Ser93 lines the substrate pocket. Residues His97 and His107 each contribute to the a divalent metal cation site. Catalysis depends on His107, which acts as the Proton donor. 109-111 (NVR) lines the substrate pocket. A divalent metal cation is bound by residues His146 and His176. Positions 241-276 (YVEYNLVYDRGTLFGLQSGGRTESILMSLPPQVAWG) are important for dimerization. Position 259–261 (259–261 (GGR)) interacts with substrate.

Belongs to the aerobic coproporphyrinogen-III oxidase family. As to quaternary structure, homodimer. A divalent metal cation serves as cofactor.

The protein resides in the cytoplasm. It carries out the reaction coproporphyrinogen III + O2 + 2 H(+) = protoporphyrinogen IX + 2 CO2 + 2 H2O. It functions in the pathway porphyrin-containing compound metabolism; protoporphyrin-IX biosynthesis; protoporphyrinogen-IX from coproporphyrinogen-III (O2 route): step 1/1. Its function is as follows. Involved in the heme biosynthesis. Catalyzes the aerobic oxidative decarboxylation of propionate groups of rings A and B of coproporphyrinogen-III to yield the vinyl groups in protoporphyrinogen-IX. The sequence is that of Oxygen-dependent coproporphyrinogen-III oxidase from Stutzerimonas stutzeri (strain A1501) (Pseudomonas stutzeri).